Consider the following 341-residue polypeptide: Endolytic peptidoglycan transglycosylase RlpA (341 aa).

The first 26 residues, Met-1–Ser-26, serve as a signal peptide directing secretion. A lipid anchor (N-palmitoyl cysteine) is attached at Cys-27. Cys-27 is lipidated: S-diacylglycerol cysteine. The region spanning Ser-260–Asp-341 is the SPOR domain.

This sequence belongs to the RlpA family.

The protein localises to the cell membrane. Its function is as follows. Lytic transglycosylase with a strong preference for naked glycan strands that lack stem peptides. Required for efficient separation of daughter cells and maintenance of rod shape. The chain is Endolytic peptidoglycan transglycosylase RlpA from Pseudomonas aeruginosa (strain UCBPP-PA14).